The following is a 294-amino-acid chain: Fatty acyl-CoA reductase Rv0547c (294 aa).

The NADP(+) site is built by serine 49, serine 50, isoleucine 52, arginine 72, aspartate 97, leucine 98, asparagine 124, tyrosine 192, lysine 196, valine 225, and threonine 227. Tyrosine 192 functions as the Proton acceptor in the catalytic mechanism.

This sequence belongs to the short-chain dehydrogenases/reductases (SDR) family.

It localises to the host mitochondrion. It carries out the reaction hexadecanal + NADP(+) + CoA = hexadecanoyl-CoA + NADPH + H(+). Oxidoreductase that promotes the persistence of M.tuberculosis in host macrophages by reprogramming the fatty acid metabolism in host mitochondria. When localized in the host mitochondria, it potentially acts on unknown lipid substrates and converts them into products that directly or indirectly alter the lipid profile of the mitochondria. This change in lipid profile results in increased mitochondrial membrane fluidity, enhanced endogenous fatty acid oxidation and increased mitochondrial spare respiratory capacity. All these events eventually favor M.tuberculosis persistence in the host macrophages. In vitro, can catalyze the NADPH-dependent reduction of palmitoyl-CoA (hexadecanoyl-CoA). This chain is Fatty acyl-CoA reductase Rv0547c, found in Mycobacterium tuberculosis (strain ATCC 25618 / H37Rv).